Here is an 802-residue protein sequence, read N- to C-terminus: Probable inactive leucine-rich repeat receptor-like protein kinase At3g03770 (802 aa).

Positions methionine 1–leucine 26 are cleaved as a signal peptide. The Extracellular segment spans residues glutamine 27–alanine 391. Residues asparagine 52 and asparagine 83 are each glycosylated (N-linked (GlcNAc...) asparagine). LRR repeat units lie at residues glutamate 71–isoleucine 94, leucine 104–leucine 128, serine 129–leucine 152, alanine 153–leucine 176, proline 177–leucine 200, serine 201–asparagine 225, glutamine 227–serine 244, asparagine 245–serine 268, leucine 269–leucine 293, proline 294–asparagine 317, and glutamine 319–serine 341. A glycan (N-linked (GlcNAc...) asparagine) is linked at asparagine 135. Asparagine 190 carries N-linked (GlcNAc...) asparagine glycosylation. N-linked (GlcNAc...) asparagine glycans are attached at residues asparagine 300 and asparagine 313. A helical transmembrane segment spans residues leucine 392 to leucine 412. The Cytoplasmic segment spans residues arginine 413–arginine 802. A Protein kinase domain is found at phenylalanine 477 to leucine 759. The disordered stretch occupies residues asparagine 761 to arginine 802. Low complexity predominate over residues serine 762–serine 777. Over residues serine 791–arginine 802 the composition is skewed to basic and acidic residues.

This sequence belongs to the protein kinase superfamily. Ser/Thr protein kinase family.

It localises to the cell membrane. The protein is Probable inactive leucine-rich repeat receptor-like protein kinase At3g03770 of Arabidopsis thaliana (Mouse-ear cress).